Consider the following 235-residue polypeptide: Glycerol-3-phosphate acyltransferase (235 aa).

6 helical membrane passes run 2-22 (FTLI…TSII), 56-76 (TVTI…VVFF), 94-114 (LIAG…GFKG), 126-146 (FGIA…VVFL), 152-172 (VASI…KYLF), and 190-210 (FIHD…AAAI).

This sequence belongs to the PlsY family. As to quaternary structure, probably interacts with PlsX.

The protein resides in the cell inner membrane. The enzyme catalyses an acyl phosphate + sn-glycerol 3-phosphate = a 1-acyl-sn-glycero-3-phosphate + phosphate. It participates in lipid metabolism; phospholipid metabolism. Catalyzes the transfer of an acyl group from acyl-phosphate (acyl-PO(4)) to glycerol-3-phosphate (G3P) to form lysophosphatidic acid (LPA). This enzyme utilizes acyl-phosphate as fatty acyl donor, but not acyl-CoA or acyl-ACP. The protein is Glycerol-3-phosphate acyltransferase of Chlorobium phaeobacteroides (strain BS1).